The chain runs to 634 residues: RING finger protein 207 (634 aa).

Residues 25–63 form an RING-type zinc finger; it reads CHLCQEQYEHPCLLDCYHTFCASCLRGRVADSRLTCPVC. A B box-type; atypical zinc finger spans residues 93–145; sequence EETVQCANCDLECKKQDVDAMYYCNTCCQPLCRDCRETTHKAKMFSRHEIVSL. Zn(2+) contacts are provided by cysteine 98, cysteine 101, cysteine 127, and histidine 132. A disordered region spans residues 575–634; sequence YEDSTSTADTQPSNELSCNTEDNWTLNSLSEETNPKNKDYYRTNKQKNTTDSTNRKEIPM. Positions 577–606 are enriched in polar residues; it reads DSTSTADTQPSNELSCNTEDNWTLNSLSEE. Residues 607-616 are compositionally biased toward basic and acidic residues; sequence TNPKNKDYYR.

Its subcellular location is the cytoplasm. Functionally, plays a role in cardiac repolarization possibly by stabilizing membrane expression of the potassium channel kcnh6a/zerg, or by assisting its synthesis, folding or export from the endoplasmic reticulum, in a heat shock protein-dependent manner. In Danio rerio (Zebrafish), this protein is RING finger protein 207 (rnf207b).